Consider the following 85-residue polypeptide: uncharacterized protein (85 aa).

Disordered regions lie at residues 1-28 and 35-54; these read MPQKPLKVTKKAKDPRRVTKKQKNLRKA and SKKKSLQHLKKLKKSSSLTE. Basic residues predominate over residues 35 to 48; sequence SKKKSLQHLKKLKK.

The protein resides in the nucleus. This is an uncharacterized protein from Saccharomyces cerevisiae (strain ATCC 204508 / S288c) (Baker's yeast).